The following is a 147-amino-acid chain: Hemoglobin subunit gamma-2 (147 aa).

Positions 3-147 constitute a Globin domain; sequence HFTEEDKATI…VASALSSRYH (145 aa). Phosphothreonine is present on threonine 13. 3 positions are modified to phosphoserine: serine 45, serine 51, and serine 53. The residue at position 60 (lysine 60) is an N6-acetyllysine. Position 64 (histidine 64) interacts with heme b. Residue lysine 83 is modified to N6-acetyllysine. Histidine 93 contributes to the heme b binding site. Cysteine 94 carries the post-translational modification S-nitrosocysteine. Phosphoserine occurs at positions 140, 143, and 144.

It belongs to the globin family. As to quaternary structure, heterotetramer of two alpha chains and two gamma chains in fetal hemoglobin (Hb F). In terms of tissue distribution, red blood cells.

Its function is as follows. Gamma chains make up the fetal hemoglobin F, in combination with alpha chains. This chain is Hemoglobin subunit gamma-2 (HBG2), found in Pongo pygmaeus (Bornean orangutan).